The sequence spans 144 residues: Transcription antitermination protein NusB (144 aa).

Belongs to the NusB family.

Its function is as follows. Involved in transcription antitermination. Required for transcription of ribosomal RNA (rRNA) genes. Binds specifically to the boxA antiterminator sequence of the ribosomal RNA (rrn) operons. In Pasteurella multocida (strain Pm70), this protein is Transcription antitermination protein NusB.